The sequence spans 384 residues: 8-amino-7-oxononanoate synthase (384 aa).

Arg-21 contacts substrate. 108-109 (GF) serves as a coordination point for pyridoxal 5'-phosphate. Residue His-133 participates in substrate binding. Residues Ser-179, His-207, and Thr-233 each contribute to the pyridoxal 5'-phosphate site. Lys-236 is subject to N6-(pyridoxal phosphate)lysine. Residue Thr-352 coordinates substrate.

This sequence belongs to the class-II pyridoxal-phosphate-dependent aminotransferase family. BioF subfamily. As to quaternary structure, homodimer. It depends on pyridoxal 5'-phosphate as a cofactor.

The enzyme catalyses 6-carboxyhexanoyl-[ACP] + L-alanine + H(+) = (8S)-8-amino-7-oxononanoate + holo-[ACP] + CO2. The protein operates within cofactor biosynthesis; biotin biosynthesis. In terms of biological role, catalyzes the decarboxylative condensation of pimeloyl-[acyl-carrier protein] and L-alanine to produce 8-amino-7-oxononanoate (AON), [acyl-carrier protein], and carbon dioxide. This chain is 8-amino-7-oxononanoate synthase, found in Shigella dysenteriae serotype 1 (strain Sd197).